The following is a 95-amino-acid chain: Histone-like DNA-binding protein (95 aa).

It belongs to the bacterial histone-like protein family.

This chain is Histone-like DNA-binding protein, found in Rickettsia rickettsii.